A 295-amino-acid chain; its full sequence is Cbb3-type cytochrome c oxidase subunit CcoP (295 aa).

Residues 1–31 lie on the Cytoplasmic side of the membrane; it reads MAQKEKDALSGVETTGHEWDGLRELNNPLPK. Residues 32 to 52 traverse the membrane as a helical segment; it reads WWLYIFYVCIAWSLVYYVLYP. The Periplasmic portion of the chain corresponds to 53–295; it reads AWPLGKSYTK…VYVHNLGGGK (243 aa). Cytochrome c domains are found at residues 108–200 and 207–292; these read FAMA…LSLN and AAAE…HNLG. Residues Cys-121, Cys-124, His-125, Met-175, Cys-220, Cys-223, His-224, and Met-269 each contribute to the heme c site.

It belongs to the CcoP / FixP family. In terms of assembly, component of the cbb3-type cytochrome c oxidase at least composed of CcoN, CcoO, CcoQ and CcoP. It depends on heme c as a cofactor.

It is found in the cell inner membrane. It functions in the pathway energy metabolism; oxidative phosphorylation. C-type cytochrome. Part of the cbb3-type cytochrome c oxidase complex. CcoP subunit is required for transferring electrons from donor cytochrome c via its heme groups to CcoO subunit. From there, electrons are shuttled to the catalytic binuclear center of CcoN subunit where oxygen reduction takes place. The complex also functions as a proton pump. The chain is Cbb3-type cytochrome c oxidase subunit CcoP from Azospirillum brasilense.